The following is a 193-amino-acid chain: Probable nicotinate-nucleotide adenylyltransferase (193 aa).

Belongs to the NadD family.

The catalysed reaction is nicotinate beta-D-ribonucleotide + ATP + H(+) = deamido-NAD(+) + diphosphate. Its pathway is cofactor biosynthesis; NAD(+) biosynthesis; deamido-NAD(+) from nicotinate D-ribonucleotide: step 1/1. Its function is as follows. Catalyzes the reversible adenylation of nicotinate mononucleotide (NaMN) to nicotinic acid adenine dinucleotide (NaAD). The chain is Probable nicotinate-nucleotide adenylyltransferase from Borreliella afzelii (strain PKo) (Borrelia afzelii).